The sequence spans 85 residues: MAKGQSLQDPFLNALRRERVPVSIYLVNGIKLQGQVESFDQFVILLKNTVSQMVYKHAISTVVPARPFNVSAHQGTAHGEESDAE.

Residues 9–68 (DPFLNALRRERVPVSIYLVNGIKLQGQVESFDQFVILLKNTVSQMVYKHAISTVVPARPF) form the Sm domain.

This sequence belongs to the Hfq family. Homohexamer.

Functionally, RNA chaperone that binds small regulatory RNA (sRNAs) and mRNAs to facilitate mRNA translational regulation in response to envelope stress, environmental stress and changes in metabolite concentrations. Also binds with high specificity to tRNAs. In Shewanella frigidimarina (strain NCIMB 400), this protein is RNA-binding protein Hfq.